A 538-amino-acid chain; its full sequence is MISGNILNVFTGDIYPAEIEVAGGRVRCVRSISGNFSDIIIPGFIDAHLHIESSMLIPSSFAAAAIPHGTVSAISDPHEIANVMGVDGVRFMIDDAAATPMKFYFTAPSCVPATPFETAGAEITARGIEELLRMDSVVALGEMMNFPAVIAGDDGVMAKIKAARDLNMPVDGHAPLLSGDELCTYIGAGISTDHECVSPEEVLEKRRLGMKIMAREGSSARNLRDLAAAGCDFLVSDDIHPADLLEGHMDRILRRAVDYGIDPVSAVQMVTINPAEHYGLSTGAIAPGWDADFVVVDSLRDFNVKRVYIDGRPVADRGRYLIRRSGGTRAPPRKLEVPDFPVERLNIRAEGDEATVRVIDVLDGQLITEELIATLEVEDGTVQADTSSDILRVSVLDRYGRGNISSGFVHGFGLQEGAIASTVAHDSHNLIVVGVDPELMKRAVDILKKAGGGLVAVSGDDHRVLQLPVAGLMSDGDVFEVADGFENLNTFTEQLGSRLSAPFMTMSFLSLLVIPRLKIGDRGLFDVEKFEIKNLMEM.

It belongs to the metallo-dependent hydrolases superfamily. Adenine deaminase family. Requires Mn(2+) as cofactor.

The catalysed reaction is adenine + H2O + H(+) = hypoxanthine + NH4(+). This chain is Adenine deaminase, found in Methanothermobacter thermautotrophicus (strain ATCC 29096 / DSM 1053 / JCM 10044 / NBRC 100330 / Delta H) (Methanobacterium thermoautotrophicum).